The following is a 436-amino-acid chain: Xylose isomerase (436 aa).

Residues His-100 and Asp-103 contribute to the active site. Mg(2+) contacts are provided by Glu-231, Glu-267, His-270, Asp-295, Asp-306, Asp-308, and Asp-338.

It belongs to the xylose isomerase family. In terms of assembly, homotetramer. Mg(2+) is required as a cofactor.

The protein localises to the cytoplasm. The catalysed reaction is alpha-D-xylose = alpha-D-xylulofuranose. The polypeptide is Xylose isomerase (Rhizobium etli (strain CIAT 652)).